The sequence spans 195 residues: HTH-type transcriptional regulator BetI (195 aa).

Residues 8-68 form the HTH tetR-type domain; the sequence is SIRRRQLIDA…ATMRDITSQL (61 aa). A DNA-binding region (H-T-H motif) is located at residues 31-50; the sequence is TIAQIARRAGVSTGIISHYF.

The protein operates within amine and polyamine biosynthesis; betaine biosynthesis via choline pathway [regulation]. In terms of biological role, repressor involved in the biosynthesis of the osmoprotectant glycine betaine. It represses transcription of the choline transporter BetT and the genes of BetAB involved in the synthesis of glycine betaine. The protein is HTH-type transcriptional regulator BetI of Escherichia coli (strain UTI89 / UPEC).